The primary structure comprises 153 residues: Aspartate carbamoyltransferase regulatory chain (153 aa).

Zn(2+) is bound by residues Cys-109, Cys-114, Cys-138, and Cys-141.

It belongs to the PyrI family. As to quaternary structure, contains catalytic and regulatory chains. Zn(2+) is required as a cofactor.

In terms of biological role, involved in allosteric regulation of aspartate carbamoyltransferase. In Wigglesworthia glossinidia brevipalpis, this protein is Aspartate carbamoyltransferase regulatory chain.